Reading from the N-terminus, the 325-residue chain is Hydroxymethylglutaryl-CoA lyase, mitochondrial (325 aa).

A mitochondrion-targeting transit peptide spans 1-27; it reads MATVKKVLPRRLVGLATLRAVSTSSVG. Residues 33 to 300 form the Pyruvate carboxyltransferase domain; the sequence is VKIVEVGPRD…HTGVNLQKLL (268 aa). Residue Arg-41 participates in substrate binding. Position 42 (Asp-42) interacts with a divalent metal cation. The residue at position 48 (Lys-48) is an N6-acetyllysine; alternate. Residue Lys-48 is modified to N6-succinyllysine; alternate. Lys-111 carries the post-translational modification N6-acetyllysine. N6-acetyllysine; alternate is present on residues Lys-137 and Lys-179. N6-succinyllysine; alternate is present on residues Lys-137 and Lys-179. Positions 233 and 235 each coordinate a divalent metal cation. The active site involves Cys-266. Residue Asn-275 coordinates a divalent metal cation. Residues 323-325 carry the Microbody targeting signal motif; the sequence is CKL. Lys-324 carries the N6-acetyllysine modification.

Belongs to the HMG-CoA lyase family. In terms of assembly, homodimer; disulfide-linked. Can also form homotetramers.

It localises to the mitochondrion matrix. The protein localises to the peroxisome. It carries out the reaction (3S)-3-hydroxy-3-methylglutaryl-CoA = acetoacetate + acetyl-CoA. It participates in metabolic intermediate metabolism; (S)-3-hydroxy-3-methylglutaryl-CoA degradation; acetoacetate from (S)-3-hydroxy-3-methylglutaryl-CoA: step 1/1. Functionally, mitochondrial 3-hydroxy-3-methylglutaryl-CoA lyase that catalyzes a cation-dependent cleavage of (S)-3-hydroxy-3-methylglutaryl-CoA into acetyl-CoA and acetoacetate, a key step in ketogenesis. Terminal step in leucine catabolism. Ketone bodies (beta-hydroxybutyrate, acetoacetate and acetone) are essential as an alternative source of energy to glucose, as lipid precursors and as regulators of metabolism. This Bos taurus (Bovine) protein is Hydroxymethylglutaryl-CoA lyase, mitochondrial (HMGCL).